The primary structure comprises 89 residues: Huwentoxin-IV (89 aa).

Residues 1–24 (MVNMKASMFLALAGLVLLFVVCYA) form the signal peptide. Residues 25–52 (SESEEKEFSNELLSSVLAVDDNSKGEER) constitute a propeptide that is removed on maturation. At E53 the chain carries Pyrrolidone carboxylic acid (Glu); partial. Disulfide bonds link C54–C69, C61–C76, and C68–C83. Position 87 is an isoleucine amide (I87).

This sequence belongs to the neurotoxin 10 (Hwtx-1) family. 22 (Htx-4) subfamily. In terms of processing, two forms of huwentoxin-IV exist in the venom of H.schmidti, a non-N-terminally modified (HwTx-IV) and a naturally modified peptide with pyroglutamic acid residue at position 53 (mHwTx-IV). mHwTx-IV shows no observable difference with the unmodified toxin when applied to the TTX-S sodium channel of DRG neuron (IC(50)~50 nM) or when tested on hNav1.7/SCN9A (IC(50)=30.8 nM). In addition, similarly to the unmodified toxin, mHwTx-IV has only a weak affinity for lipid membranes. However, in contrast with HwTx-IV, which dissociates at moderate and high depolarization voltages (50-200 mV), mHwTx-IV inhibition of TTX-sensitive sodium channels is not reversed by strong depolarization voltages. In terms of tissue distribution, expressed by the venom gland.

It localises to the secreted. In terms of biological role, this lethal neurotoxin (without cyclization at position 53) inhibits neuronal voltage-gated sodium channel Nav1.2/SCN2A (IC(50)=10-150 nM), rNav1.3/SCN3A (IC(50)=338 nM), Nav1.6/SCN8A (IC(50)=117 nM), and hNav1.7/SCN9A (IC(50)=9.6-33 nM). It inhibits activation of sodium channel by trapping the voltage sensor of domain II (DIIS4) in the closed configuration. The toxin neither shifts the Nav1.7/SCN9A activation curve nor modifies the slope factor. It does not slow fast-inactivation of hNav1.7/SCN9A channels. In addition, it has only a weak affinity for lipid membranes. This toxin also exists with a pyroglutamate at position 53. The sole difference observed between modified (mHwTx-IV) and unmodified toxins is that moderate or high depolarization voltages (200 mV) permit the unmodified toxin to dissociate, whereas mHwTx-IV toxin does not dissociate, even at high depolarization voltages. These data indicate that mHwTx-IV strongly binds to voltage sensor of sodium channel even at extreme depolarization voltages. This chain is Huwentoxin-IV, found in Cyriopagopus schmidti (Chinese bird spider).